The sequence spans 446 residues: ATP-dependent protease ATPase subunit HslU (446 aa).

ATP is bound by residues Val18, 60–65, Asp259, Glu324, and Arg396; that span reads GVGKTE.

This sequence belongs to the ClpX chaperone family. HslU subfamily. A double ring-shaped homohexamer of HslV is capped on each side by a ring-shaped HslU homohexamer. The assembly of the HslU/HslV complex is dependent on binding of ATP.

Its subcellular location is the cytoplasm. ATPase subunit of a proteasome-like degradation complex; this subunit has chaperone activity. The binding of ATP and its subsequent hydrolysis by HslU are essential for unfolding of protein substrates subsequently hydrolyzed by HslV. HslU recognizes the N-terminal part of its protein substrates and unfolds these before they are guided to HslV for hydrolysis. The sequence is that of ATP-dependent protease ATPase subunit HslU from Acidovorax ebreus (strain TPSY) (Diaphorobacter sp. (strain TPSY)).